The chain runs to 196 residues: S-norcoclaurine synthase 2 (196 aa).

Residues 1–19 (MRMEVVLVVFLMFIGTINC) form the signal peptide. 104-106 (YRE) is a dopamine binding site. K118 (proton donor) is an active-site residue. Residue D137 coordinates (4-hydroxyphenyl)acetaldehyde.

It belongs to the BetVI family.

It catalyses the reaction (4-hydroxyphenyl)acetaldehyde + dopamine = (S)-norcoclaurine + H2O. Not inhibited by O-phenanthroline or EDTA. Functionally, involved in the biosynthesis of the common precursor of all benzylisoquinoline alkaloids such as morphine, sanguinarine, codeine or berberine. Condenses dopamine and pyruvic acid or 4-hydroxyphenylpyruvate. This Coptis japonica (Japanese goldthread) protein is S-norcoclaurine synthase 2 (PR10A).